A 145-amino-acid chain; its full sequence is 3-hydroxyacyl-[acyl-carrier-protein] dehydratase FabZ (145 aa).

Histidine 49 is a catalytic residue.

It belongs to the thioester dehydratase family. FabZ subfamily.

The protein localises to the cytoplasm. It catalyses the reaction a (3R)-hydroxyacyl-[ACP] = a (2E)-enoyl-[ACP] + H2O. In terms of biological role, involved in unsaturated fatty acids biosynthesis. Catalyzes the dehydration of short chain beta-hydroxyacyl-ACPs and long chain saturated and unsaturated beta-hydroxyacyl-ACPs. This is 3-hydroxyacyl-[acyl-carrier-protein] dehydratase FabZ from Rickettsia bellii (strain RML369-C).